The chain runs to 109 residues: Probable cytochrome b-c1 complex subunit 7 (109 aa).

It belongs to the UQCRB/QCR7 family. As to quaternary structure, component of the ubiquinol-cytochrome c oxidoreductase (cytochrome b-c1 complex, complex III, CIII), a multisubunit enzyme composed of 3 respiratory subunits cytochrome b, cytochrome c1 and Rieske protein, 2 core protein subunits, and additional low-molecular weight protein subunits. The complex exists as an obligatory dimer and forms supercomplexes (SCs) in the inner mitochondrial membrane with cytochrome c oxidase (complex IV, CIV).

It localises to the mitochondrion inner membrane. Functionally, component of the ubiquinol-cytochrome c oxidoreductase, a multisubunit transmembrane complex that is part of the mitochondrial electron transport chain which drives oxidative phosphorylation. The respiratory chain contains 3 multisubunit complexes succinate dehydrogenase (complex II, CII), ubiquinol-cytochrome c oxidoreductase (cytochrome b-c1 complex, complex III, CIII) and cytochrome c oxidase (complex IV, CIV), that cooperate to transfer electrons derived from NADH and succinate to molecular oxygen, creating an electrochemical gradient over the inner membrane that drives transmembrane transport and the ATP synthase. The cytochrome b-c1 complex catalyzes electron transfer from ubiquinol to cytochrome c, linking this redox reaction to translocation of protons across the mitochondrial inner membrane, with protons being carried across the membrane as hydrogens on the quinol. In the process called Q cycle, 2 protons are consumed from the matrix, 4 protons are released into the intermembrane space and 2 electrons are passed to cytochrome c. This chain is Probable cytochrome b-c1 complex subunit 7, found in Dictyostelium discoideum (Social amoeba).